We begin with the raw amino-acid sequence, 706 residues long: Polyribonucleotide nucleotidyltransferase (706 aa).

2 residues coordinate Mg(2+): Asp486 and Asp492. Residues 553–612 form the KH domain; it reads PRIYTMKINPEKIKDVIGKGGSVIRALTDETGTTIEIEDDGTIKIAATDGDKAKHAIRRI. The 69-residue stretch at 622-690 folds into the S1 motif domain; it reads NRIYAGKVTR…RQGRIRLSMK (69 aa).

The protein belongs to the polyribonucleotide nucleotidyltransferase family. Component of the RNA degradosome, which is a multiprotein complex involved in RNA processing and mRNA degradation. Mg(2+) is required as a cofactor.

It localises to the cytoplasm. It catalyses the reaction RNA(n+1) + phosphate = RNA(n) + a ribonucleoside 5'-diphosphate. Its function is as follows. Involved in mRNA degradation. Catalyzes the phosphorolysis of single-stranded polyribonucleotides processively in the 3'- to 5'-direction. This Yersinia enterocolitica serotype O:8 / biotype 1B (strain NCTC 13174 / 8081) protein is Polyribonucleotide nucleotidyltransferase.